Reading from the N-terminus, the 180-residue chain is Dynactin subunit 6 (180 aa).

Belongs to the dynactin subunits 5/6 family. Dynactin subunit 6 subfamily. Subunit of dynactin, a multiprotein complex part of a tripartite complex with dynein and a adapter, such as BICDL1, BICD2 or HOOK3. The dynactin complex is built around ACTR1A/ACTB filament and consists of an actin-related filament composed of a shoulder domain, a pointed end and a barbed end.

The protein localises to the cytoplasm. It is found in the cytoskeleton. Part of the dynactin complex that activates the molecular motor dynein for ultra-processive transport along microtubules. The sequence is that of Dynactin subunit 6 (dnc-6) from Caenorhabditis elegans.